A 102-amino-acid chain; its full sequence is Ferredoxin, 2Fe-2S (102 aa).

[2Fe-2S] cluster-binding residues include cysteine 11, cysteine 24, cysteine 56, and cysteine 60.

The protein belongs to the 2Fe2S Shethna-type ferredoxin family. It depends on [2Fe-2S] cluster as a cofactor.

In terms of biological role, ferredoxins are iron-sulfur proteins that transfer electrons in a wide variety of metabolic reactions. In Clostridium pasteurianum, this protein is Ferredoxin, 2Fe-2S.